Reading from the N-terminus, the 968-residue chain is uncharacterized protein (968 aa).

Residues 1–27 (MHSWKKKLVVSQLALACTLAITSQANA) form the signal peptide. The Autotransporter domain occupies 703–968 (GLADNGGAWV…SANVGVKYTW (266 aa)).

This is an uncharacterized protein from Escherichia coli (strain K12).